The sequence spans 375 residues: Glutamate 5-kinase (375 aa).

K17 lines the ATP pocket. S57, D144, and N156 together coordinate substrate. 176–177 is a binding site for ATP; it reads TD. A PUA domain is found at 283–361; it reads KGRLWLDTGA…HQIEQILGYV (79 aa).

It belongs to the glutamate 5-kinase family.

It localises to the cytoplasm. It carries out the reaction L-glutamate + ATP = L-glutamyl 5-phosphate + ADP. Its pathway is amino-acid biosynthesis; L-proline biosynthesis; L-glutamate 5-semialdehyde from L-glutamate: step 1/2. Functionally, catalyzes the transfer of a phosphate group to glutamate to form L-glutamate 5-phosphate. The sequence is that of Glutamate 5-kinase from Nitrosococcus oceani (strain ATCC 19707 / BCRC 17464 / JCM 30415 / NCIMB 11848 / C-107).